Consider the following 247-residue polypeptide: MKVKCTVSYDGTHFKGYQVQPGQRTVQTEIESALAKMHKQDELVPIVASGRTDSGVHAKGQVIHFDTPLSIPMERWPFALNSLLPDDIRVLKAEEVDESFHARFSVVSKEYRYKVSTETHQNVFTRQYACHFPYRLDADKMREAAGYLIGTHDFTSFCAANTEVQDKVREIYTLEWKNVSDGLEMRVRGNGFLYNMVRIIAGTLLEVGSGKFHPDEIKAMLAARNREAAGKTAPSHGLYLWEVFYDN.

The Nucleophile role is filled by D53. Y111 is a substrate binding site.

This sequence belongs to the tRNA pseudouridine synthase TruA family. Homodimer.

It catalyses the reaction uridine(38/39/40) in tRNA = pseudouridine(38/39/40) in tRNA. Functionally, formation of pseudouridine at positions 38, 39 and 40 in the anticodon stem and loop of transfer RNAs. This is tRNA pseudouridine synthase A from Bacillus pumilus (strain SAFR-032).